We begin with the raw amino-acid sequence, 586 residues long: Asparagine synthetase, nodule [glutamine-hydrolyzing] (586 aa).

The active-site For GATase activity is the Cys2. Residues 2–185 enclose the Glutamine amidotransferase type-2 domain; it reads CGILAVLGCS…PGHLYSSKER (184 aa). Residues 50–54, 75–77, and Asp98 each bind L-glutamine; these read RLAIV and NGE. Residues 193-517 enclose the Asparagine synthetase domain; the sequence is PPWFNEAIIP…PQNSARLTVP (325 aa). ATP-binding positions include Leu232, Val268, and 342–343; that span reads SG.

Root nodules.

The enzyme catalyses L-aspartate + L-glutamine + ATP + H2O = L-asparagine + L-glutamate + AMP + diphosphate + H(+). It functions in the pathway amino-acid biosynthesis; L-asparagine biosynthesis; L-asparagine from L-aspartate (L-Gln route): step 1/1. This Pisum sativum (Garden pea) protein is Asparagine synthetase, nodule [glutamine-hydrolyzing] (AS1).